The sequence spans 315 residues: Diacylglycerol kinase (315 aa).

One can recognise a DAGKc domain in the interval M1–Y132. Residues N10–G14, T41, G67–E73, and T94 contribute to the ATP site. The Mg(2+) site is built by K213, D216, and Y218. E273 functions as the Proton acceptor in the catalytic mechanism.

It belongs to the diacylglycerol/lipid kinase family. In terms of assembly, homodimer. Mg(2+) is required as a cofactor.

It carries out the reaction a 1,2-diacyl-sn-glycerol + ATP = a 1,2-diacyl-sn-glycero-3-phosphate + ADP + H(+). Its function is as follows. Catalyzes the phosphorylation of diacylglycerol (DAG) into phosphatidic acid. Is a key enzyme involved in the production of lipoteichoic acid by reintroducing DAG formed from the breakdown of membrane phospholipids into the phosphatidylglycerol biosynthetic pathway. The sequence is that of Diacylglycerol kinase (dagK) from Staphylococcus aureus (strain MRSA252).